We begin with the raw amino-acid sequence, 234 residues long: Leucyl/phenylalanyl-tRNA--protein transferase (234 aa).

The protein belongs to the L/F-transferase family.

The protein localises to the cytoplasm. It carries out the reaction N-terminal L-lysyl-[protein] + L-leucyl-tRNA(Leu) = N-terminal L-leucyl-L-lysyl-[protein] + tRNA(Leu) + H(+). The enzyme catalyses N-terminal L-arginyl-[protein] + L-leucyl-tRNA(Leu) = N-terminal L-leucyl-L-arginyl-[protein] + tRNA(Leu) + H(+). It catalyses the reaction L-phenylalanyl-tRNA(Phe) + an N-terminal L-alpha-aminoacyl-[protein] = an N-terminal L-phenylalanyl-L-alpha-aminoacyl-[protein] + tRNA(Phe). Its function is as follows. Functions in the N-end rule pathway of protein degradation where it conjugates Leu, Phe and, less efficiently, Met from aminoacyl-tRNAs to the N-termini of proteins containing an N-terminal arginine or lysine. In Shigella flexneri serotype 5b (strain 8401), this protein is Leucyl/phenylalanyl-tRNA--protein transferase.